A 207-amino-acid polypeptide reads, in one-letter code: uncharacterized protein (207 aa).

5 consecutive transmembrane segments (helical) span residues 28 to 48 (IAVL…IVFV), 59 to 79 (EGFI…FLIV), 112 to 132 (MFLL…VAGL), 140 to 160 (FILA…FIGY), and 165 to 185 (LITQ…LWYV).

The protein resides in the cell membrane. This is an uncharacterized protein from Bacillus subtilis (strain 168).